We begin with the raw amino-acid sequence, 157 residues long: 2-C-methyl-D-erythritol 2,4-cyclodiphosphate synthase (157 aa).

Positions 8 and 10 each coordinate a divalent metal cation. 4-CDP-2-C-methyl-D-erythritol 2-phosphate contacts are provided by residues 8–10 and 34–35; these read DVH and HS. Histidine 42 is a binding site for a divalent metal cation. Residues 56 to 58, 132 to 135, and arginine 142 contribute to the 4-CDP-2-C-methyl-D-erythritol 2-phosphate site; these read DIG and TTNE.

It belongs to the IspF family. As to quaternary structure, homotrimer. The cofactor is a divalent metal cation.

It carries out the reaction 4-CDP-2-C-methyl-D-erythritol 2-phosphate = 2-C-methyl-D-erythritol 2,4-cyclic diphosphate + CMP. It participates in isoprenoid biosynthesis; isopentenyl diphosphate biosynthesis via DXP pathway; isopentenyl diphosphate from 1-deoxy-D-xylulose 5-phosphate: step 4/6. Functionally, involved in the biosynthesis of isopentenyl diphosphate (IPP) and dimethylallyl diphosphate (DMAPP), two major building blocks of isoprenoid compounds. Catalyzes the conversion of 4-diphosphocytidyl-2-C-methyl-D-erythritol 2-phosphate (CDP-ME2P) to 2-C-methyl-D-erythritol 2,4-cyclodiphosphate (ME-CPP) with a corresponding release of cytidine 5-monophosphate (CMP). The protein is 2-C-methyl-D-erythritol 2,4-cyclodiphosphate synthase of Chlorobaculum tepidum (strain ATCC 49652 / DSM 12025 / NBRC 103806 / TLS) (Chlorobium tepidum).